The primary structure comprises 533 residues: uncharacterized protein (533 aa).

Polar residues-rich tracts occupy residues 30 to 43 (SQQG…VKNH), 79 to 91 (NAGT…THLS), 231 to 247 (NVKS…SSSA), and 254 to 263 (GRQSNSPNSN). Disordered regions lie at residues 30–92 (SQQG…HLSA) and 221–274 (SLSP…PGAS). Position 336 is a phosphoserine (Ser336). A disordered region spans residues 475-510 (HPSLSNSAASPPVSSPGLRRSHIPVHEGLKHTRDGV). The span at 476 to 490 (PSLSNSAASPPVSSP) shows a compositional bias: low complexity. Residues 498–510 (PVHEGLKHTRDGV) show a composition bias toward basic and acidic residues.

Its subcellular location is the nucleus. This is an uncharacterized protein from Schizosaccharomyces pombe (strain 972 / ATCC 24843) (Fission yeast).